We begin with the raw amino-acid sequence, 784 residues long: Endonuclease MutS2 (784 aa).

335 to 342 (GPNTGGKT) provides a ligand contact to ATP. Residues 527–546 (ERSKKQAEEDEARAHSAREE) are disordered. The region spanning 709 to 784 (LDLRGERYED…GTGVTVVELK (76 aa)) is the Smr domain.

This sequence belongs to the DNA mismatch repair MutS family. MutS2 subfamily. As to quaternary structure, homodimer. Binds to stalled ribosomes, contacting rRNA.

In terms of biological role, endonuclease that is involved in the suppression of homologous recombination and thus may have a key role in the control of bacterial genetic diversity. Functionally, acts as a ribosome collision sensor, splitting the ribosome into its 2 subunits. Detects stalled/collided 70S ribosomes which it binds and splits by an ATP-hydrolysis driven conformational change. Acts upstream of the ribosome quality control system (RQC), a ribosome-associated complex that mediates the extraction of incompletely synthesized nascent chains from stalled ribosomes and their subsequent degradation. Probably generates substrates for RQC. The protein is Endonuclease MutS2 of Geobacillus thermodenitrificans (strain NG80-2).